The following is a 305-amino-acid chain: MIKQRTLKRIVQATGVGLHTGKKVTLTLRPAPANTGVIYRRTDLNPPVDFPADAKSVRDTMLCTCLVNEHDVRISTVEHLNAALAGLGIDNIVIEVNAPEIPIMDGSAAPFVYLLLDAGIDELNCAKKFVRIKETVRVEDGDKWAEFRPYNGFTLDFTIDFSHPAIDSSSQRYAMNFSADAFMRQISRARTFGFMRDIEYLQSRGLCLGGSFDCAIVVDDYRVLNEDGLRFEDEFVRHKMLDAIGDLFMCGHNIIGAFTAYKSGHALNNKLLQAVLAKQEAWEFVTFQDDAELPLAFKAPSTVLA.

Residues His79, His238, and Asp242 each contribute to the Zn(2+) site. Catalysis depends on His265, which acts as the Proton donor.

It belongs to the LpxC family. It depends on Zn(2+) as a cofactor.

It carries out the reaction a UDP-3-O-[(3R)-3-hydroxyacyl]-N-acetyl-alpha-D-glucosamine + H2O = a UDP-3-O-[(3R)-3-hydroxyacyl]-alpha-D-glucosamine + acetate. Its pathway is glycolipid biosynthesis; lipid IV(A) biosynthesis; lipid IV(A) from (3R)-3-hydroxytetradecanoyl-[acyl-carrier-protein] and UDP-N-acetyl-alpha-D-glucosamine: step 2/6. Functionally, catalyzes the hydrolysis of UDP-3-O-myristoyl-N-acetylglucosamine to form UDP-3-O-myristoylglucosamine and acetate, the committed step in lipid A biosynthesis. The protein is UDP-3-O-acyl-N-acetylglucosamine deacetylase of Salmonella paratyphi A (strain ATCC 9150 / SARB42).